Reading from the N-terminus, the 204-residue chain is Prephenate decarboxylase (204 aa).

This sequence belongs to the prephenate decarboxylase family.

It localises to the cytoplasm. The catalysed reaction is prephenate + H(+) = 3-[(4R)-4-hydroxycyclohexa-1,5-dien-1-yl]-2-oxopropanoate + CO2. It participates in antibiotic biosynthesis; bacilysin biosynthesis. Its function is as follows. Part of the bacABCDEF operon responsible for the biosynthesis of the nonribosomally synthesized dipeptide antibiotic bacilysin, composed of L-alanine and L-anticapsin. Bacilysin is an irreversible inactivator of the glutaminase domain of glucosamine synthetase. BacA is an unusual prephenate decarboxylase that avoids the typical aromatization of the cyclohexadienol ring of prephenate. BacA catalyzes the protonation of prephenate (1-carboxy-4-hydroxy-alpha-oxo-2,5-cyclohexadiene-1-propanoic acid) at C6 position, followed by a decarboxylation to produce the endocyclic-delta(4),delta(8)-7R-dihydro-hydroxyphenylpyruvate (en-H2HPP). En-H2HPP is able to undergo a slow nonenzymatic isomerization to produce the exocyclic-delta(3),delta(5)-dihydro-hydroxyphenylpyruvate (ex-H2HPP). BacA isomerizes only the pro-R double bond in prephenate. The protein is Prephenate decarboxylase of Bacillus subtilis.